We begin with the raw amino-acid sequence, 581 residues long: MDIIKGNLDGISKPASNSRIRPGSRSSNASLEVLSTEPASCKVDTASNLNSGKEDHSESSNTENRRTSNDDKRESCSEKIKLAEEGSDEDLDLVQRQIIPECSDEHKLEELDSQLQDAIQKMKKLDKILAKTQRREKEIKKQGLEMRIKLWEEIKSAKYSEAWQSKEEMENTKKFLSLTAASEETVGPSHENEDSFSSVFHTQIPPEEYEKQMQKLSKDFTCDVERNESLIKAGKKPFSNTEKIELRGKHNQDFIKRNIELAKESRNPVVMIEREKKRLVELLKDLDEKDSGLSSSEGDQSGWVVPVKGYALAVTQHQQLAEIDIKLQELSAASPAISSFSPRLENQNNQEPDLDGEKNMEVTPGEKVLRNTKEQRDLRIRLREIDEKLRMMKENVLQSTSRLSEEQLKCLLDECIVKQKSIIKLSSEGENEDIEDVIPMFPQLSRSIISKLLNESGTKVQKTEAEDADMLESAEREASKGYYLTKALTGHRMSEALVTEVENMKCLQFSKNDIISDTKDYFMSKTLGIGRLKRPSFLDDPLYGITVSLSSEDQHLKLNSPEKTKADEQETKDAAEECKEP.

The interval 1–77 is disordered; it reads MDIIKGNLDG…SNDDKRESCS (77 aa). Residues 14 to 30 are compositionally biased toward polar residues; the sequence is PASNSRIRPGSRSSNAS. Residues 52–77 show a composition bias toward basic and acidic residues; it reads GKEDHSESSNTENRRTSNDDKRESCS. S87 is modified (phosphoserine). A coiled-coil region spans residues 103 to 153; that stretch reads SDEHKLEELDSQLQDAIQKMKKLDKILAKTQRREKEIKKQGLEMRIKLWEE. Disordered regions lie at residues 338–370 and 553–581; these read SSFS…KVLR and DQHL…CKEP.

Belongs to the FSIP1 family.

This is Fibrous sheath-interacting protein 1 (FSIP1) from Macaca fascicularis (Crab-eating macaque).